We begin with the raw amino-acid sequence, 87 residues long: Small ribosomal subunit protein bS20 (87 aa).

It belongs to the bacterial ribosomal protein bS20 family.

Binds directly to 16S ribosomal RNA. This Alkaliphilus oremlandii (strain OhILAs) (Clostridium oremlandii (strain OhILAs)) protein is Small ribosomal subunit protein bS20.